Here is a 445-residue protein sequence, read N- to C-terminus: Serine--tRNA ligase (445 aa).

Position 229 to 231 (229 to 231 (TAE)) interacts with L-serine. Residues 260–262 (RKE) and Val276 each bind ATP. Position 283 (Glu283) interacts with L-serine. 347–350 (EVSS) is an ATP binding site. Residue Ser383 participates in L-serine binding.

Belongs to the class-II aminoacyl-tRNA synthetase family. Type-1 seryl-tRNA synthetase subfamily. As to quaternary structure, homodimer. The tRNA molecule binds across the dimer.

Its subcellular location is the cytoplasm. It carries out the reaction tRNA(Ser) + L-serine + ATP = L-seryl-tRNA(Ser) + AMP + diphosphate + H(+). The enzyme catalyses tRNA(Sec) + L-serine + ATP = L-seryl-tRNA(Sec) + AMP + diphosphate + H(+). It participates in aminoacyl-tRNA biosynthesis; selenocysteinyl-tRNA(Sec) biosynthesis; L-seryl-tRNA(Sec) from L-serine and tRNA(Sec): step 1/1. Functionally, catalyzes the attachment of serine to tRNA(Ser). Is also able to aminoacylate tRNA(Sec) with serine, to form the misacylated tRNA L-seryl-tRNA(Sec), which will be further converted into selenocysteinyl-tRNA(Sec). The chain is Serine--tRNA ligase from Thermomicrobium roseum (strain ATCC 27502 / DSM 5159 / P-2).